The chain runs to 270 residues: Fluoride-specific ion channel FluC 1 (270 aa).

4 helical membrane passes run 4–24, 35–55, 67–87, and 96–116; these read IIIL…FIML, LDIL…TALY, IIGT…YGSV, and AFLI…VAVL. Na(+) is bound by residues Gly-74 and Ser-77.

Belongs to the fluoride channel Fluc/FEX (TC 1.A.43) family.

It is found in the cell inner membrane. It catalyses the reaction fluoride(in) = fluoride(out). Na(+) is not transported, but it plays an essential structural role and its presence is essential for fluoride channel function. Functionally, fluoride-specific ion channel. Important for reducing fluoride concentration in the cell, thus reducing its toxicity. The sequence is that of Fluoride-specific ion channel FluC 1 from Brucella abortus biovar 1 (strain 9-941).